The primary structure comprises 273 residues: ComE operon protein 4 (273 aa).

The protein belongs to the pyrroline-5-carboxylate reductase family.

Functionally, dispensable for transformability. Not known if it can act as a pyrroline-5-carboxylate reductase. In Bacillus subtilis (strain 168), this protein is ComE operon protein 4 (comER).